The sequence spans 398 residues: Probable aminomethyltransferase (398 aa).

This sequence belongs to the GcvT family. As to quaternary structure, the glycine cleavage system is composed of four proteins: P, T, L and H.

The catalysed reaction is N(6)-[(R)-S(8)-aminomethyldihydrolipoyl]-L-lysyl-[protein] + (6S)-5,6,7,8-tetrahydrofolate = N(6)-[(R)-dihydrolipoyl]-L-lysyl-[protein] + (6R)-5,10-methylene-5,6,7,8-tetrahydrofolate + NH4(+). In terms of biological role, the glycine cleavage system catalyzes the degradation of glycine. The protein is Probable aminomethyltransferase of Pyrococcus furiosus (strain ATCC 43587 / DSM 3638 / JCM 8422 / Vc1).